A 224-amino-acid polypeptide reads, in one-letter code: MIGKVAGILDFRGPDHVLIDVRGVGYIVYVSDRTLASMPGLGEAVALYTELVVREDLLQLFGFPTMIEKEWHRLLMTVQGVGAKAGMAILGALGAEGTARAITLGDARSIQAAPGIGPKIAQRVVLELKSKAPALMAMGGGTAALAPSEPPEPQPGTSSGSRRKTRAPEPPRPSHTADALSALANLGYQPTDAAQAVAQAAGESPDADTAALIRAALKLLAPKS.

Positions 1-64 are domain I; sequence MIGKVAGILD…EDLLQLFGFP (64 aa). The interval 65 to 143 is domain II; sequence TMIEKEWHRL…ALMAMGGGTA (79 aa). Residues 141-185 are disordered; sequence GTAALAPSEPPEPQPGTSSGSRRKTRAPEPPRPSHTADALSALAN. The tract at residues 144–170 is flexible linker; sequence ALAPSEPPEPQPGTSSGSRRKTRAPEP. The interval 171–224 is domain III; sequence PRPSHTADALSALANLGYQPTDAAQAVAQAAGESPDADTAALIRAALKLLAPKS.

The protein belongs to the RuvA family. As to quaternary structure, homotetramer. Forms an RuvA(8)-RuvB(12)-Holliday junction (HJ) complex. HJ DNA is sandwiched between 2 RuvA tetramers; dsDNA enters through RuvA and exits via RuvB. An RuvB hexamer assembles on each DNA strand where it exits the tetramer. Each RuvB hexamer is contacted by two RuvA subunits (via domain III) on 2 adjacent RuvB subunits; this complex drives branch migration. In the full resolvosome a probable DNA-RuvA(4)-RuvB(12)-RuvC(2) complex forms which resolves the HJ.

It is found in the cytoplasm. In terms of biological role, the RuvA-RuvB-RuvC complex processes Holliday junction (HJ) DNA during genetic recombination and DNA repair, while the RuvA-RuvB complex plays an important role in the rescue of blocked DNA replication forks via replication fork reversal (RFR). RuvA specifically binds to HJ cruciform DNA, conferring on it an open structure. The RuvB hexamer acts as an ATP-dependent pump, pulling dsDNA into and through the RuvAB complex. HJ branch migration allows RuvC to scan DNA until it finds its consensus sequence, where it cleaves and resolves the cruciform DNA. This Cereibacter sphaeroides (strain KD131 / KCTC 12085) (Rhodobacter sphaeroides) protein is Holliday junction branch migration complex subunit RuvA.